A 98-amino-acid polypeptide reads, in one-letter code: NADH-ubiquinone oxidoreductase chain 4L (98 aa).

3 helical membrane-spanning segments follow: residues 1–21 (MSLI…GLLM), 26–46 (LMSA…FTTL), and 61–81 (IILL…LVMI).

Belongs to the complex I subunit 4L family. In terms of assembly, core subunit of respiratory chain NADH dehydrogenase (Complex I) which is composed of 45 different subunits.

The protein localises to the mitochondrion inner membrane. The enzyme catalyses a ubiquinone + NADH + 5 H(+)(in) = a ubiquinol + NAD(+) + 4 H(+)(out). Its function is as follows. Core subunit of the mitochondrial membrane respiratory chain NADH dehydrogenase (Complex I) which catalyzes electron transfer from NADH through the respiratory chain, using ubiquinone as an electron acceptor. Part of the enzyme membrane arm which is embedded in the lipid bilayer and involved in proton translocation. The protein is NADH-ubiquinone oxidoreductase chain 4L (MT-ND4L) of Physeter macrocephalus (Sperm whale).